Here is a 941-residue protein sequence, read N- to C-terminus: Isoleucine--tRNA ligase (941 aa).

The 'HIGH' region motif lies at 69 to 79 (PYANGDIHIGH). Glu589 contributes to the L-isoleucyl-5'-AMP binding site. The short motif at 630-634 (KMSKS) is the 'KMSKS' region element. Lys633 lines the ATP pocket. Zn(2+) contacts are provided by Cys915, Cys918, Cys932, and Cys935.

It belongs to the class-I aminoacyl-tRNA synthetase family. IleS type 1 subfamily. As to quaternary structure, monomer. It depends on Zn(2+) as a cofactor.

It is found in the cytoplasm. The enzyme catalyses tRNA(Ile) + L-isoleucine + ATP = L-isoleucyl-tRNA(Ile) + AMP + diphosphate. In terms of biological role, catalyzes the attachment of isoleucine to tRNA(Ile). As IleRS can inadvertently accommodate and process structurally similar amino acids such as valine, to avoid such errors it has two additional distinct tRNA(Ile)-dependent editing activities. One activity is designated as 'pretransfer' editing and involves the hydrolysis of activated Val-AMP. The other activity is designated 'posttransfer' editing and involves deacylation of mischarged Val-tRNA(Ile). This is Isoleucine--tRNA ligase from Zymomonas mobilis subsp. mobilis (strain ATCC 31821 / ZM4 / CP4).